We begin with the raw amino-acid sequence, 390 residues long: Dynein regulatory complex subunit 5 (390 aa).

3 LRR repeats span residues Thr182–Ser205, Asn210–Lys233, and His238–Arg261.

Belongs to the DRC5 family. As to quaternary structure, component of the nexin-dynein regulatory complex (N-DRC). Interacts with DRC1, DRC2, DRC3, DRC4, DRC7 and DRC11.

It is found in the cell projection. The protein resides in the cilium. The protein localises to the flagellum. It localises to the cytoplasm. Its subcellular location is the cytoskeleton. It is found in the flagellum axoneme. In terms of biological role, component of the nexin-dynein regulatory complex (N-DRC) a key regulator of ciliary/flagellar motility which maintains the alignment and integrity of the distal axoneme and regulates microtubule sliding in motile axonemes. May play a role in the assembly of N-DRC. The sequence is that of Dynein regulatory complex subunit 5 from Chlamydomonas reinhardtii (Chlamydomonas smithii).